The following is a 55-amino-acid chain: U-reduvitoxin-Pr2a (55 aa).

The first 21 residues, 1–21 (MMKFLLVLFLITITLITMAYS), serve as a signal peptide directing secretion. Cystine bridges form between cysteine 26/cysteine 41, cysteine 33/cysteine 46, and cysteine 40/cysteine 51.

Belongs to the venom Ptu1-like knottin family. Expressed by the venom gland (posterior main gland) (at protein level).

It localises to the secreted. Its function is as follows. Binds reversibly and blocks P/Q-type voltage-gated calcium channels (Cav). This chain is U-reduvitoxin-Pr2a, found in Platymeris rhadamanthus (Red spot assassin bug).